A 193-amino-acid polypeptide reads, in one-letter code: Holliday junction branch migration complex subunit RuvA (193 aa).

Residues 1–64 are domain I; it reads MIGRIAGTLL…EDAHLLYGFL (64 aa). The segment at 65-139 is domain II; the sequence is TPPERSTFRE…GKLGADLGPL (75 aa). Residues 139 to 143 form a flexible linker region; that stretch reads LAGAA. Residues 144–193 form a domain III region; sequence SPSDHATDILNALVALGYSEKEALAAIKNVPAGTGVSEGIKLSLKALSKA.

The protein belongs to the RuvA family. In terms of assembly, homotetramer. Forms an RuvA(8)-RuvB(12)-Holliday junction (HJ) complex. HJ DNA is sandwiched between 2 RuvA tetramers; dsDNA enters through RuvA and exits via RuvB. An RuvB hexamer assembles on each DNA strand where it exits the tetramer. Each RuvB hexamer is contacted by two RuvA subunits (via domain III) on 2 adjacent RuvB subunits; this complex drives branch migration. In the full resolvosome a probable DNA-RuvA(4)-RuvB(12)-RuvC(2) complex forms which resolves the HJ.

It is found in the cytoplasm. In terms of biological role, the RuvA-RuvB-RuvC complex processes Holliday junction (HJ) DNA during genetic recombination and DNA repair, while the RuvA-RuvB complex plays an important role in the rescue of blocked DNA replication forks via replication fork reversal (RFR). RuvA specifically binds to HJ cruciform DNA, conferring on it an open structure. The RuvB hexamer acts as an ATP-dependent pump, pulling dsDNA into and through the RuvAB complex. HJ branch migration allows RuvC to scan DNA until it finds its consensus sequence, where it cleaves and resolves the cruciform DNA. The protein is Holliday junction branch migration complex subunit RuvA of Burkholderia mallei (strain NCTC 10229).